Here is a 414-residue protein sequence, read N- to C-terminus: Na(+)-translocating NADH-quinone reductase subunit B (414 aa).

4 consecutive transmembrane segments (helical) span residues 23 to 40 (WFAL…PGLV), 56 to 76 (IMIM…YNAG), 129 to 149 (FLPI…LFCM), and 164 to 184 (ILFA…LGIT). Position 236 is an FMN phosphoryl threonine (Thr-236). 5 helical membrane-spanning segments follow: residues 268 to 288 (IPGS…AMIV), 297 to 317 (IIAG…VVGS), 325 to 345 (MPWH…FMAT), 358 to 378 (WWYG…NPAY), and 381 to 401 (GMML…HVVI).

This sequence belongs to the NqrB/RnfD family. Composed of six subunits; NqrA, NqrB, NqrC, NqrD, NqrE and NqrF. FMN is required as a cofactor.

The protein localises to the cell inner membrane. It catalyses the reaction a ubiquinone + n Na(+)(in) + NADH + H(+) = a ubiquinol + n Na(+)(out) + NAD(+). In terms of biological role, NQR complex catalyzes the reduction of ubiquinone-1 to ubiquinol by two successive reactions, coupled with the transport of Na(+) ions from the cytoplasm to the periplasm. NqrA to NqrE are probably involved in the second step, the conversion of ubisemiquinone to ubiquinol. This chain is Na(+)-translocating NADH-quinone reductase subunit B, found in Vibrio parahaemolyticus serotype O3:K6 (strain RIMD 2210633).